The following is a 480-amino-acid chain: Aspartyl/glutamyl-tRNA(Asn/Gln) amidotransferase subunit B (480 aa).

It belongs to the GatB/GatE family. GatB subfamily. In terms of assembly, heterotrimer of A, B and C subunits.

The enzyme catalyses L-glutamyl-tRNA(Gln) + L-glutamine + ATP + H2O = L-glutaminyl-tRNA(Gln) + L-glutamate + ADP + phosphate + H(+). It catalyses the reaction L-aspartyl-tRNA(Asn) + L-glutamine + ATP + H2O = L-asparaginyl-tRNA(Asn) + L-glutamate + ADP + phosphate + 2 H(+). In terms of biological role, allows the formation of correctly charged Asn-tRNA(Asn) or Gln-tRNA(Gln) through the transamidation of misacylated Asp-tRNA(Asn) or Glu-tRNA(Gln) in organisms which lack either or both of asparaginyl-tRNA or glutaminyl-tRNA synthetases. The reaction takes place in the presence of glutamine and ATP through an activated phospho-Asp-tRNA(Asn) or phospho-Glu-tRNA(Gln). The chain is Aspartyl/glutamyl-tRNA(Asn/Gln) amidotransferase subunit B from Streptococcus pneumoniae (strain Hungary19A-6).